The following is a 71-amino-acid chain: UPF0346 protein SAK_1533 (71 aa).

Belongs to the UPF0346 family.

This Streptococcus agalactiae serotype Ia (strain ATCC 27591 / A909 / CDC SS700) protein is UPF0346 protein SAK_1533.